Here is a 198-residue protein sequence, read N- to C-terminus: Putative glutathione S-transferase alpha-5 (198 aa).

A GST N-terminal domain is found at 2 to 78 (TKPTLTYFPV…YISEKHDFRG (77 aa)). Glutathione is bound by residues Y8, R42, 49–50 (QL), and 62–63 (QT). The GST C-terminal domain occupies 80 to 198 (TKEERARAHQ…YLESRPQSNF (119 aa)).

The protein belongs to the GST superfamily. Alpha family.

It catalyses the reaction RX + glutathione = an S-substituted glutathione + a halide anion + H(+). Its function is as follows. Conjugation of reduced glutathione to a wide number of exogenous and endogenous hydrophobic electrophiles. In Dictyostelium discoideum (Social amoeba), this protein is Putative glutathione S-transferase alpha-5 (gsta5).